Reading from the N-terminus, the 288-residue chain is uncharacterized protein (288 aa).

This is an uncharacterized protein from Haemophilus influenzae (strain ATCC 51907 / DSM 11121 / KW20 / Rd).